Consider the following 202-residue polypeptide: Na(+)-translocating NADH-quinone reductase subunit E (202 aa).

Transmembrane regions (helical) follow at residues Val-5–Met-25, Val-35–Leu-55, Phe-81–Phe-101, Gly-114–Val-134, Leu-144–Ile-164, and Leu-180–Met-200.

The protein belongs to the NqrDE/RnfAE family. In terms of assembly, composed of six subunits; NqrA, NqrB, NqrC, NqrD, NqrE and NqrF.

Its subcellular location is the cell inner membrane. It carries out the reaction a ubiquinone + n Na(+)(in) + NADH + H(+) = a ubiquinol + n Na(+)(out) + NAD(+). In terms of biological role, NQR complex catalyzes the reduction of ubiquinone-1 to ubiquinol by two successive reactions, coupled with the transport of Na(+) ions from the cytoplasm to the periplasm. NqrA to NqrE are probably involved in the second step, the conversion of ubisemiquinone to ubiquinol. This chain is Na(+)-translocating NADH-quinone reductase subunit E, found in Psychrobacter sp. (strain PRwf-1).